Reading from the N-terminus, the 487-residue chain is Glycogen synthase (487 aa).

An ADP-alpha-D-glucose-binding site is contributed by Lys15.

This sequence belongs to the glycosyltransferase 1 family. Bacterial/plant glycogen synthase subfamily.

The catalysed reaction is [(1-&gt;4)-alpha-D-glucosyl](n) + ADP-alpha-D-glucose = [(1-&gt;4)-alpha-D-glucosyl](n+1) + ADP + H(+). Its pathway is glycan biosynthesis; glycogen biosynthesis. Functionally, synthesizes alpha-1,4-glucan chains using ADP-glucose. The chain is Glycogen synthase from Leptothrix cholodnii (strain ATCC 51168 / LMG 8142 / SP-6) (Leptothrix discophora (strain SP-6)).